Here is a 689-residue protein sequence, read N- to C-terminus: Glycine--tRNA ligase beta subunit (689 aa).

It belongs to the class-II aminoacyl-tRNA synthetase family. Tetramer of two alpha and two beta subunits.

The protein localises to the cytoplasm. It carries out the reaction tRNA(Gly) + glycine + ATP = glycyl-tRNA(Gly) + AMP + diphosphate. This Shigella boydii serotype 4 (strain Sb227) protein is Glycine--tRNA ligase beta subunit.